Here is a 262-residue protein sequence, read N- to C-terminus: Aminoglycoside (3'') (9) adenylyltransferase (262 aa).

The catalysed reaction is streptomycin + ATP = 3''-O-adenylylstreptomycin + diphosphate. The enzyme catalyses spectinomycin + ATP = 9-O-adenylylspectinomycin + diphosphate. In terms of biological role, mediates bacterial resistance to the antibiotics streptomycin and spectinomycin. The polypeptide is Aminoglycoside (3'') (9) adenylyltransferase (Klebsiella pneumoniae).